A 415-amino-acid chain; its full sequence is Methylthioribose-1-phosphate isomerase (415 aa).

The active-site Proton donor is D284.

It belongs to the eIF-2B alpha/beta/delta subunits family. MtnA subfamily.

Its subcellular location is the cytoplasm. The protein resides in the nucleus. The catalysed reaction is 5-(methylsulfanyl)-alpha-D-ribose 1-phosphate = 5-(methylsulfanyl)-D-ribulose 1-phosphate. The protein operates within amino-acid biosynthesis; L-methionine biosynthesis via salvage pathway; L-methionine from S-methyl-5-thio-alpha-D-ribose 1-phosphate: step 1/6. Catalyzes the interconversion of methylthioribose-1-phosphate (MTR-1-P) into methylthioribulose-1-phosphate (MTRu-1-P). The polypeptide is Methylthioribose-1-phosphate isomerase (Candida glabrata (strain ATCC 2001 / BCRC 20586 / JCM 3761 / NBRC 0622 / NRRL Y-65 / CBS 138) (Yeast)).